We begin with the raw amino-acid sequence, 538 residues long: Neutral protease B (538 aa).

An N-terminal signal peptide occupies residues 1–28; that stretch reads MRNLTKTSLLLAGLCTAAQMVFVTHASA. Residues 29–223 constitute a propeptide, activation peptide; sequence EESIEYDHTY…VIESFNAIHE (195 aa). Asp365 lines the Ca(2+) pocket. Position 369 (His369) interacts with Zn(2+). Glu370 is an active-site residue. Residues His373 and Glu393 each contribute to the Zn(2+) site. Ca(2+) contacts are provided by Asp404, Asp406, Asp407, Glu409, Glu412, Tyr415, Thr416, Ile419, and Asp422. The segment at 421–441 is disordered; the sequence is GDSLRSLEDPSKQGNPDHYSN. Catalysis depends on His453, which acts as the Proton donor.

This sequence belongs to the peptidase M4 family. The cofactor is Zn(2+).

The protein localises to the secreted. Protease activity can be inhibited in vitro by either a zinc specific chelator, 1,10-phenanthroline, or a metal chelator, EDTA. The enzyme is resistant to phenylmethylsulfonyl fluoride and iodoacetic acid. Functionally, protease able to cleave casein in vitro. This chain is Neutral protease B, found in Bacillus subtilis (strain 168).